The chain runs to 112 residues: MAKIQFIQGVDEEAIPDVKLSRSQDGANGIAKFYFDKPTVFDVYQGEITGLYLIDEEGELSTRTVYAKFINGKPQSIEASYIMNNREEWERFIRFMERYAKQNDLSFTKAKN.

Belongs to the Psb28 family. In terms of assembly, part of the photosystem II complex.

The protein localises to the plastid. Its subcellular location is the cyanelle thylakoid membrane. In Cyanophora paradoxa, this protein is Photosystem II reaction center Psb28 protein.